Here is a 457-residue protein sequence, read N- to C-terminus: D-inositol 3-phosphate glycosyltransferase (457 aa).

H34 provides a ligand contact to 1D-myo-inositol 3-phosphate. UDP-N-acetyl-alpha-D-glucosamine contacts are provided by residues 40–41 (QP) and G48. 1D-myo-inositol 3-phosphate-binding positions include 45–50 (DAGGMN), K103, Y136, T160, and R180. R267, K272, and V333 together coordinate UDP-N-acetyl-alpha-D-glucosamine. Positions 342, 343, and 345 each coordinate Mg(2+). The UDP-N-acetyl-alpha-D-glucosamine site is built by E355 and E363. T369 provides a ligand contact to Mg(2+).

It belongs to the glycosyltransferase group 1 family. MshA subfamily. Homodimer.

It catalyses the reaction 1D-myo-inositol 3-phosphate + UDP-N-acetyl-alpha-D-glucosamine = 1D-myo-inositol 2-acetamido-2-deoxy-alpha-D-glucopyranoside 3-phosphate + UDP + H(+). In terms of biological role, catalyzes the transfer of a N-acetyl-glucosamine moiety to 1D-myo-inositol 3-phosphate to produce 1D-myo-inositol 2-acetamido-2-deoxy-glucopyranoside 3-phosphate in the mycothiol biosynthesis pathway. The protein is D-inositol 3-phosphate glycosyltransferase of Streptomyces coelicolor (strain ATCC BAA-471 / A3(2) / M145).